Consider the following 384-residue polypeptide: N-acetyldiaminopimelate deacetylase (384 aa).

Aspartate 74 is an active-site residue. Catalysis depends on glutamate 133, which acts as the Proton acceptor.

It belongs to the peptidase M20A family. N-acetyldiaminopimelate deacetylase subfamily.

The catalysed reaction is N-acetyl-(2S,6S)-2,6-diaminopimelate + H2O = (2S,6S)-2,6-diaminopimelate + acetate. Its pathway is amino-acid biosynthesis; L-lysine biosynthesis via DAP pathway; LL-2,6-diaminopimelate from (S)-tetrahydrodipicolinate (acetylase route): step 3/3. Its function is as follows. Catalyzes the conversion of N-acetyl-diaminopimelate to diaminopimelate and acetate. This Lactiplantibacillus plantarum (strain ATCC BAA-793 / NCIMB 8826 / WCFS1) (Lactobacillus plantarum) protein is N-acetyldiaminopimelate deacetylase.